Here is a 356-residue protein sequence, read N- to C-terminus: Probable cysteine protease RDL6 (356 aa).

Positions 1-26 are cleaved as a signal peptide; sequence MGFVRPVCMTILFLLIVFVLSAPSSA. Positions 27–132 are cleaved as a propeptide — activation peptide; it reads MDLPATSGGH…RRYVPLAGDQ (106 aa). 2 N-linked (GlcNAc...) asparagine glycosylation sites follow: Asn-37 and Asn-86. Intrachain disulfides connect Cys-154-Cys-195, Cys-188-Cys-229, and Cys-288-Cys-339. Cys-157 is a catalytic residue. Catalysis depends on residues His-294 and Asn-314.

Belongs to the peptidase C1 family.

Its function is as follows. Probable thiol protease. This chain is Probable cysteine protease RDL6, found in Arabidopsis thaliana (Mouse-ear cress).